We begin with the raw amino-acid sequence, 227 residues long: Small ribosomal subunit protein uS3 (227 aa).

The region spanning 38 to 106 (LRKYLREKLA…EVHLNIVEIR (69 aa)) is the KH type-2 domain.

It belongs to the universal ribosomal protein uS3 family. In terms of assembly, part of the 30S ribosomal subunit. Forms a tight complex with proteins S10 and S14.

Its function is as follows. Binds the lower part of the 30S subunit head. Binds mRNA in the 70S ribosome, positioning it for translation. In Paramagnetospirillum magneticum (strain ATCC 700264 / AMB-1) (Magnetospirillum magneticum), this protein is Small ribosomal subunit protein uS3.